A 258-amino-acid chain; its full sequence is Axonemal dynein light intermediate polypeptide 1 (258 aa).

Disordered regions lie at residues 1–60 and 202–231; these read MIPP…CVPD and DLERQVNEQKAKCEATEKRESERRQVEEKK. Residues 176–255 are a coiled coil; that stretch reads MRKALQAEQG…LKAQLEGIIA (80 aa).

This sequence belongs to the inner dynein arm light chain family. In terms of assembly, interacts with CFAP45. Interacts with DYNC1H1. As to expression, predominantly expressed in the testis, also detected at lower levels in several tissues expressing cilia. Strongly expressed in elongating spermatid cells (at protein level).

The protein localises to the cell projection. It is found in the cilium. It localises to the flagellum. The protein resides in the dynein axonemal particle. Its subcellular location is the cytoplasm. Its function is as follows. Involved in sperm flagellum assembly. In Mus musculus (Mouse), this protein is Axonemal dynein light intermediate polypeptide 1.